A 259-amino-acid chain; its full sequence is Tryptophan synthase alpha chain (259 aa).

Residues glutamate 52 and aspartate 63 each act as proton acceptor in the active site.

The protein belongs to the TrpA family. In terms of assembly, tetramer of two alpha and two beta chains.

It catalyses the reaction (1S,2R)-1-C-(indol-3-yl)glycerol 3-phosphate + L-serine = D-glyceraldehyde 3-phosphate + L-tryptophan + H2O. Its pathway is amino-acid biosynthesis; L-tryptophan biosynthesis; L-tryptophan from chorismate: step 5/5. Functionally, the alpha subunit is responsible for the aldol cleavage of indoleglycerol phosphate to indole and glyceraldehyde 3-phosphate. This chain is Tryptophan synthase alpha chain, found in Streptococcus sanguinis (strain SK36).